Reading from the N-terminus, the 531-residue chain is Bifunctional protein TrpGD (531 aa).

Positions 3 to 196 (DILLLDNIDS…LAWAQQKLEP (194 aa)) constitute a Glutamine amidotransferase type-1 domain. 57 to 59 (GPG) contributes to the L-glutamine binding site. The active-site Nucleophile; for GATase activity is the C84. L-glutamine-binding positions include Q88 and 134–135 (SL). Residues H170 and E172 each act as for GATase activity in the active site. The tract at residues 202–531 (PILEKLYQAQ…DRVTALAARG (330 aa)) is anthranilate phosphoribosyltransferase.

The protein in the C-terminal section; belongs to the anthranilate phosphoribosyltransferase family. Heterotetramer consisting of two non-identical subunits: a beta subunit (TrpG) and a large alpha subunit (TrpE).

It carries out the reaction chorismate + L-glutamine = anthranilate + pyruvate + L-glutamate + H(+). It catalyses the reaction N-(5-phospho-beta-D-ribosyl)anthranilate + diphosphate = 5-phospho-alpha-D-ribose 1-diphosphate + anthranilate. It participates in amino-acid biosynthesis; L-tryptophan biosynthesis; L-tryptophan from chorismate: step 1/5. Its pathway is amino-acid biosynthesis; L-tryptophan biosynthesis; L-tryptophan from chorismate: step 2/5. Its activity is regulated as follows. Cooperatively feedback inhibited by tryptophan. Its function is as follows. Part of a heterotetrameric complex that catalyzes the two-step biosynthesis of anthranilate, an intermediate in the biosynthesis of L-tryptophan. In the first step, the glutamine-binding beta subunit (TrpG) of anthranilate synthase (AS) provides the glutamine amidotransferase activity which generates ammonia as a substrate that, along with chorismate, is used in the second step, catalyzed by the large alpha subunit of AS (TrpE) to produce anthranilate. In the absence of TrpG, TrpE can synthesize anthranilate directly from chorismate and high concentrations of ammonia. In addition to synthesizing anthranilate, it also catalyzes the second step of the pathway, the transfer of the phosphoribosyl group of 5-phosphorylribose-1-pyrophosphate (PRPP) to anthranilate. This Escherichia coli (strain K12) protein is Bifunctional protein TrpGD (trpGD).